The chain runs to 669 residues: tRNA 5-methylaminomethyl-2-thiouridine biosynthesis bifunctional protein MnmC (669 aa).

Positions 1-246 (MIKNANIHFN…KRSMLIGTLK (246 aa)) are tRNA (mnm(5)s(2)U34)-methyltransferase. Residues 271 to 669 (IGGGIASSCI…IVRDLIRNKI (399 aa)) form an FAD-dependent cmnm(5)s(2)U34 oxidoreductase region.

The protein in the N-terminal section; belongs to the methyltransferase superfamily. tRNA (mnm(5)s(2)U34)-methyltransferase family. This sequence in the C-terminal section; belongs to the DAO family. The cofactor is FAD.

It localises to the cytoplasm. The enzyme catalyses 5-aminomethyl-2-thiouridine(34) in tRNA + S-adenosyl-L-methionine = 5-methylaminomethyl-2-thiouridine(34) in tRNA + S-adenosyl-L-homocysteine + H(+). Catalyzes the last two steps in the biosynthesis of 5-methylaminomethyl-2-thiouridine (mnm(5)s(2)U) at the wobble position (U34) in tRNA. Catalyzes the FAD-dependent demodification of cmnm(5)s(2)U34 to nm(5)s(2)U34, followed by the transfer of a methyl group from S-adenosyl-L-methionine to nm(5)s(2)U34, to form mnm(5)s(2)U34. In Pseudoalteromonas translucida (strain TAC 125), this protein is tRNA 5-methylaminomethyl-2-thiouridine biosynthesis bifunctional protein MnmC.